Reading from the N-terminus, the 673-residue chain is DNA topoisomerase 1 (673 aa).

The Toprim domain maps to 1–134; sequence MVAEKPKAAA…ARRMKFSTLA (134 aa). 2 residues coordinate Mg(2+): Glu-4 and Asp-103. The Topo IA-type catalytic domain occupies 149-568; the sequence is DVEMIEAGMA…MSKKTISKLL (420 aa). The interaction with DNA stretch occupies residues 189–194; the sequence is SAGRVQ. Tyr-311 functions as the O-(5'-phospho-DNA)-tyrosine intermediate in the catalytic mechanism. The interval 352–374 is disordered; the sequence is LRPVQGSKDDPAHPAIHPTGEKP. The segment at 595-615 adopts a C4-type zinc-finger fold; that stretch reads CHLCGRKAVSAVSGYRLCSHH.

This sequence belongs to the type IA topoisomerase family. As to quaternary structure, monomer. Mg(2+) serves as cofactor.

The catalysed reaction is ATP-independent breakage of single-stranded DNA, followed by passage and rejoining.. In terms of biological role, releases the supercoiling and torsional tension of DNA, which is introduced during the DNA replication and transcription, by transiently cleaving and rejoining one strand of the DNA duplex. Introduces a single-strand break via transesterification at a target site in duplex DNA. The scissile phosphodiester is attacked by the catalytic tyrosine of the enzyme, resulting in the formation of a DNA-(5'-phosphotyrosyl)-enzyme intermediate and the expulsion of a 3'-OH DNA strand. The free DNA strand then undergoes passage around the unbroken strand, thus removing DNA supercoils. Finally, in the religation step, the DNA 3'-OH attacks the covalent intermediate to expel the active-site tyrosine and restore the DNA phosphodiester backbone. This chain is DNA topoisomerase 1, found in Aeropyrum pernix (strain ATCC 700893 / DSM 11879 / JCM 9820 / NBRC 100138 / K1).